Consider the following 349-residue polypeptide: MELGNFVTDLNGKKCVKCDKDAKFTGVDPKKAWYCQECFVQMVRNKFRSSLSKKKIYKDADARDTLIVFDGTLSGTFLLHQINDALKQITYKRLMVKPTVLVLVSLTEDTEIQMVIKRIQEIKKSVLENVRWVVAHLACSMYDEDFKLKENECNGVEKISDYNQLIASCSVPTYRKELERVLKEKCLQKIACSMGILKCMVPDHADDLGRLAIDQLCLGRGGSISTLVTVTDKRPDFMLIRPLCDISKKELAVYNYLCDIDKHCIHIAQQNNQQKSVQTLTDAFICTLENEKFYSTINTVLSTAAKIHNTSIGKDDSKCSFCNVEVADSVCSTCSAIRECTGDLLTLLF.

The protein belongs to the CTU2/NCS2 family.

It is found in the cytoplasm. It participates in tRNA modification; 5-methoxycarbonylmethyl-2-thiouridine-tRNA biosynthesis. Plays a central role in 2-thiolation of mcm(5)S(2)U at tRNA wobble positions of tRNA(Lys), tRNA(Glu) and tRNA(Gln). May act by forming a heterodimer with tut-1/ctu-1 that ligates sulfur from thiocarboxylated urm-1 onto the uridine of tRNAs at wobble position. The protein is Cytoplasmic tRNA 2-thiolation protein 2 of Caenorhabditis elegans.